The sequence spans 545 residues: Prolyl 3-hydroxylase OGFOD1 (545 aa).

The interval 1–23 is disordered; sequence MNGKRPADPGPARPMKKGKKQVS. The Fe2OG dioxygenase domain occupies 137–239; that stretch reads PTIDMSCAKY…RLSISGWFYG (103 aa). 2 residues coordinate Fe cation: His-155 and Asp-157. Tyr-169 contributes to the 2-oxoglutarate binding site. His-218 is a Fe cation binding site. A 2-oxoglutarate-binding site is contributed by Arg-230. Positions 371-380 are enriched in acidic residues; it reads SEDDETEEKG. The segment at 371 to 437 is disordered; it reads SEDDETEEKG…EAKKESSVPM (67 aa). A compositionally biased stretch (low complexity) spans 383–393; sequence ETASAAAGTEE. Residues 402-417 are compositionally biased toward polar residues; that stretch reads PENNQVAAGSHSQENG.

The protein belongs to the TPA1 family. As to quaternary structure, monomer. It depends on Fe(2+) as a cofactor. L-ascorbate serves as cofactor.

It is found in the cytoplasm. The protein localises to the nucleus. It carries out the reaction [ribosomal protein uS12]-L-proline + 2-oxoglutarate + O2 = [ribosomal protein uS12]-(3S)-3-hydroxy-L-proline + succinate + CO2. In terms of biological role, prolyl 3-hydroxylase that catalyzes 3-hydroxylation of 'Pro-62' of small ribosomal subunit uS12 (RPS23), thereby regulating protein translation termination efficiency. Involved in stress granule formation. The polypeptide is Prolyl 3-hydroxylase OGFOD1 (Ogfod1) (Mus musculus (Mouse)).